The chain runs to 66 residues: Large ribosomal subunit protein bL35 (66 aa).

Belongs to the bacterial ribosomal protein bL35 family.

In Cereibacter sphaeroides (strain ATCC 17029 / ATH 2.4.9) (Rhodobacter sphaeroides), this protein is Large ribosomal subunit protein bL35.